The sequence spans 218 residues: Peptidase E (218 aa).

Residues S123, D138, and H160 each act as charge relay system in the active site.

This sequence belongs to the peptidase S51 family.

The protein localises to the cytoplasm. The enzyme catalyses Dipeptidase E catalyzes the hydrolysis of dipeptides Asp-|-Xaa. It does not act on peptides with N-terminal Glu, Asn or Gln, nor does it cleave isoaspartyl peptides.. Functionally, hydrolyzes dipeptides containing N-terminal aspartate residues. May play a role in allowing the cell to use peptide aspartate to spare carbon otherwise required for the synthesis of the aspartate family of amino acids. In Haemophilus influenzae (strain ATCC 51907 / DSM 11121 / KW20 / Rd), this protein is Peptidase E.